Reading from the N-terminus, the 97-residue chain is Unclassified hydrophobin F (97 aa).

The first 17 residues, 1–17 (MRVSALAFAAVLSLVSA), serve as a signal peptide directing secretion. 4 disulfide bridges follow: Cys-24-Cys-75, Cys-39-Cys-67, Cys-40-Cys-58, and Cys-76-Cys-85.

The protein localises to the secreted. The protein resides in the cell wall. Its function is as follows. Aerial growth, conidiation, and dispersal of filamentous fungi in the environment rely upon a capability of their secreting small amphipathic proteins called hydrophobins (HPBs) with low sequence identity. Class I can self-assemble into an outermost layer of rodlet bundles on aerial cell surfaces, conferring cellular hydrophobicity that supports fungal growth, development and dispersal; whereas Class II form highly ordered films at water-air interfaces through intermolecular interactions but contribute nothing to the rodlet structure. In P.expansum, hydrophobins contribute to germination, tolerance to cold stress and mycotoxins patulin and citrinin production. HfbC, HfbD, HfbE, and HfbF have functional redundancy in fungal surface hydrophobicity. This Penicillium expansum (Blue mold rot fungus) protein is Unclassified hydrophobin F.